The sequence spans 172 residues: Small t antigen (172 aa).

M1 bears the N-acetylmethionine; by host mark. Positions 12 to 75 (ELMDLLGLER…VKVAHQPDFG (64 aa)) constitute a J domain. Residues 101–114 (CATKPSAHCPCMLC) form a C4-type; atypical zinc finger. Residues 120–141 (HVYRKFLRRDPLVWIDCYCFDC) form an H1C3-type; atypical zinc finger.

In terms of assembly, interacts with host PPP2R1A; the interaction inhibits PP2A activity.

It is found in the host cytoplasm. It localises to the host nucleus. Promotes efficient viral genome replication by accelerating both G1 and S phase progression of the cell cycle. Inhibits host PP2A by binding to the A subunit, thereby displacing lower affinity regulatory B subunit. Inactivation of PP2A in turn results in the transactivation of cyclin A and cyclin D1 promoters. Late during the infection cycle, ST may induce dephosphorylation of host MTOR, leading to the inhibition of cap-dependent translation. May establish and maintain high levels of viral genomes during persistent infection in cell culture. In Simian virus 12 (strain wt100) (SV-12), this protein is Small t antigen.